The chain runs to 208 residues: Uracil phosphoribosyltransferase (208 aa).

5-phospho-alpha-D-ribose 1-diphosphate contacts are provided by residues R78, R103, and 130-138 (DPMLATGGS). Uracil contacts are provided by residues I193 and 198 to 200 (GDA). D199 is a 5-phospho-alpha-D-ribose 1-diphosphate binding site.

It belongs to the UPRTase family. Requires Mg(2+) as cofactor.

It catalyses the reaction UMP + diphosphate = 5-phospho-alpha-D-ribose 1-diphosphate + uracil. It participates in pyrimidine metabolism; UMP biosynthesis via salvage pathway; UMP from uracil: step 1/1. Its activity is regulated as follows. Allosterically activated by GTP. Catalyzes the conversion of uracil and 5-phospho-alpha-D-ribose 1-diphosphate (PRPP) to UMP and diphosphate. The protein is Uracil phosphoribosyltransferase of Haemophilus influenzae (strain 86-028NP).